Here is a 335-residue protein sequence, read N- to C-terminus: Vitamin B12 import system permease protein BtuC (335 aa).

The next 9 helical transmembrane spans lie at 22 to 42 (LLLLTLGVAVAFVFSLSAGDV), 67 to 87 (LAVMLVGASLAVAGAVMQSLF), 94 to 114 (PGLLGVANGAGVALVLTVLLG), 117 to 137 (LLPVAFMSLSAIAGALVMTFL), 153 to 173 (LLVGVALGIVCSAVMTWAVYF), 200 to 220 (LVLALLPVLLWLCCQGKALNF), 243 to 263 (VLAIGWLVGVSVALAGVIGFV), 281 to 301 (YLLPGCALAGAGVLLAADVVA), and 308 to 328 (AELPIGVVTATLGAPLFIWLL).

Belongs to the binding-protein-dependent transport system permease family. FecCD subfamily. As to quaternary structure, the complex is composed of two ATP-binding proteins (BtuD), two transmembrane proteins (BtuC) and a solute-binding protein (BtuF).

The protein resides in the cell inner membrane. Part of the ABC transporter complex BtuCDF involved in vitamin B12 import. Involved in the translocation of the substrate across the membrane. The polypeptide is Vitamin B12 import system permease protein BtuC (Serratia proteamaculans (strain 568)).